Here is a 380-residue protein sequence, read N- to C-terminus: Chaperone protein DnaJ (380 aa).

A J domain is found at 4–68 (DFYSVLGVSR…EKRRMYDQMG (65 aa)). Residues 27-87 (KASEYHPDVS…RGATDTDRGR (61 aa)) show a composition bias toward basic and acidic residues. Positions 27–126 (KASEYHPDVS…SRSGPRQGSD (100 aa)) are disordered. The segment covering 88–100 (GGMGGMGGGGMGG) has biased composition (gly residues). Residues 115-124 (SQSRSGPRQG) are compositionally biased toward low complexity. The CR-type zinc finger occupies 141–223 (GVTKQLTVTR…CRGDGQVRNE (83 aa)). Residues cysteine 154, cysteine 157, cysteine 171, cysteine 174, cysteine 197, cysteine 200, cysteine 211, and cysteine 214 each contribute to the Zn(2+) site. CXXCXGXG motif repeat units follow at residues 154-161 (CPDCDGAG), 171-178 (CSACDGRG), 197-204 (CPQCDGKG), and 211-218 (CSTCRGDG).

Belongs to the DnaJ family. Homodimer. Zn(2+) is required as a cofactor.

The protein resides in the cytoplasm. Functionally, participates actively in the response to hyperosmotic and heat shock by preventing the aggregation of stress-denatured proteins and by disaggregating proteins, also in an autonomous, DnaK-independent fashion. Unfolded proteins bind initially to DnaJ; upon interaction with the DnaJ-bound protein, DnaK hydrolyzes its bound ATP, resulting in the formation of a stable complex. GrpE releases ADP from DnaK; ATP binding to DnaK triggers the release of the substrate protein, thus completing the reaction cycle. Several rounds of ATP-dependent interactions between DnaJ, DnaK and GrpE are required for fully efficient folding. Also involved, together with DnaK and GrpE, in the DNA replication of plasmids through activation of initiation proteins. This is Chaperone protein DnaJ from Natronomonas pharaonis (strain ATCC 35678 / DSM 2160 / CIP 103997 / JCM 8858 / NBRC 14720 / NCIMB 2260 / Gabara) (Halobacterium pharaonis).